Reading from the N-terminus, the 331-residue chain is Nucleotide sugar transporter SLC35B4 (331 aa).

Helical transmembrane passes span 4–24 (AFAVGLVFAGCCSNVIFLELL), 30–50 (GCGNIVTFAQFLFIAVEGFLF), 59–79 (PAIPIRYYAIMVTMFFTVSVV), 92–112 (LHMIFRSGSLIANMILGIIIL), 124–144 (IALVSAGIFICTFMSAKQVTV), 153–173 (GFQAFAWWLLGIAALTFALLM), 201–221 (ALPLPGFIFLASDIYDHVVLF), 229–249 (VPVIGVTMPVMWFYLLMNVVT), 251–267 (YVCIRGVFILTTECTSL), 268–288 (TVTLVVTLRKFVSLIFSILYF), and 294–314 (MWHWLGTSFVFIGTLMYTEVW). A Mediates endoplasmic reticulum retention motif is present at residues 326–331 (KDDKKD).

It belongs to the nucleotide-sugar transporter family. SLC35B subfamily.

The protein localises to the endoplasmic reticulum membrane. The enzyme catalyses UDP-N-acetyl-alpha-D-glucosamine(in) + UDP-alpha-D-glucuronate(out) = UDP-N-acetyl-alpha-D-glucosamine(out) + UDP-alpha-D-glucuronate(in). The catalysed reaction is UDP-alpha-D-xylose(in) + UDP-alpha-D-glucuronate(out) = UDP-alpha-D-xylose(out) + UDP-alpha-D-glucuronate(in). Functionally, antiporter that transports nucleotide sugars across the endoplasmic reticulum (ER) membrane in exchange for another nucleotide sugar. May couple UDP-alpha-D-glucuronate (UDP-GlcA) or UDP-alpha-D-xylose (UDP-Xyl) efflux to UDP-alpha-D-glucuronate (UDP-GlcA) influx into the ER lumen, which in turn stimulates glucuronidation and excretion of endobiotics and xenobiotics. The protein is Nucleotide sugar transporter SLC35B4 (Slc35b4) of Mus musculus (Mouse).